The primary structure comprises 102 residues: Urease subunit beta (102 aa).

The protein belongs to the urease beta subunit family. In terms of assembly, heterotrimer of UreA (gamma), UreB (beta) and UreC (alpha) subunits. Three heterotrimers associate to form the active enzyme.

The protein resides in the cytoplasm. It catalyses the reaction urea + 2 H2O + H(+) = hydrogencarbonate + 2 NH4(+). Its pathway is nitrogen metabolism; urea degradation; CO(2) and NH(3) from urea (urease route): step 1/1. The polypeptide is Urease subunit beta (Acinetobacter baumannii (strain ACICU)).